We begin with the raw amino-acid sequence, 358 residues long: MTTPDAAIDSKISDSNGADKNKSAADDNAFNAPGRKRHHNNQPRRDKRDVHGWVALDKPVGMTSTQAVAVVKRLFSAKRAGHAGTLDPLASGGLPIALGEATKTVPFVMDGRKRYRFTVAWGEERDTDDTEGRAVATSAERPTAEAIMALLPSFTGKIEQIPPQYSAVKIQGERAYDLARDGEVVPLAPRPVEIHHLNLADHQDSGHSVFEAECGKGTYVRALARDMGRLLGCYGHICALRRTLVGPFDETSMIPLEHLQALCDRAASGEGNLADALLPVETALDDIPALAVTRADAARLHRGQAVLLRGRDAPNMSGTVYVTVAGRLLALAELGNGELIPKRVFNLSGLTASPHRQG.

Residues 1–50 are disordered; it reads MTTPDAAIDSKISDSNGADKNKSAADDNAFNAPGRKRHHNNQPRRDKRDV. The active-site Nucleophile is Asp87.

Belongs to the pseudouridine synthase TruB family. Type 1 subfamily.

It carries out the reaction uridine(55) in tRNA = pseudouridine(55) in tRNA. Its function is as follows. Responsible for synthesis of pseudouridine from uracil-55 in the psi GC loop of transfer RNAs. This chain is tRNA pseudouridine synthase B, found in Nitrobacter winogradskyi (strain ATCC 25391 / DSM 10237 / CIP 104748 / NCIMB 11846 / Nb-255).